A 72-amino-acid polypeptide reads, in one-letter code: Large ribosomal subunit protein uL30 (72 aa).

Belongs to the universal ribosomal protein uL30 family. In terms of assembly, part of the 50S ribosomal subunit.

This is Large ribosomal subunit protein uL30 from Mycobacterium ulcerans (strain Agy99).